The sequence spans 159 residues: Neuroglobin (159 aa).

The region spanning 3–151 (KLSSKDKELI…VVASMSRGWA (149 aa)) is the Globin domain. The heme b site is built by histidine 66 and histidine 98.

This sequence belongs to the globin family. As to quaternary structure, monomer. Homodimers and homotetramers. Mainly monomeric but also detected as part of homodimers and homotetramers.

It localises to the cytoplasm. The protein localises to the cytosol. It is found in the mitochondrion matrix. It carries out the reaction Fe(III)-heme b-[protein] + nitric oxide + H2O = Fe(II)-heme b-[protein] + nitrite + 2 H(+). Functionally, monomeric globin with a bis-histidyl six-coordinate heme-iron atom through which it can bind dioxygen, carbon monoxide and nitric oxide. Could help transport oxygen and increase its availability to the metabolically active neuronal tissues, though its low quantity in tissues as well as its high affinity for dioxygen, which may limit its oxygen-releasing ability, argue against it. The ferrous/deoxygenated form exhibits a nitrite reductase activity and it could produce nitric oxide which in turn inhibits cellular respiration in response to hypoxia. In its ferrous/deoxygenated state, it may also exhibit GDI (Guanine nucleotide Dissociation Inhibitor) activity toward heterotrimeric G-alpha proteins, thereby regulating signal transduction to facilitate neuroprotective responses in the wake of hypoxia and associated oxidative stress. This is Neuroglobin (ngb) from Tetraodon nigroviridis (Spotted green pufferfish).